A 295-amino-acid polypeptide reads, in one-letter code: 4-hydroxy-tetrahydrodipicolinate synthase (295 aa).

Residue Thr46 coordinates pyruvate. Tyr134 acts as the Proton donor/acceptor in catalysis. Residue Lys162 is the Schiff-base intermediate with substrate of the active site. Val204 is a binding site for pyruvate.

This sequence belongs to the DapA family. As to quaternary structure, homotetramer; dimer of dimers.

The protein resides in the cytoplasm. The enzyme catalyses L-aspartate 4-semialdehyde + pyruvate = (2S,4S)-4-hydroxy-2,3,4,5-tetrahydrodipicolinate + H2O + H(+). It participates in amino-acid biosynthesis; L-lysine biosynthesis via DAP pathway; (S)-tetrahydrodipicolinate from L-aspartate: step 3/4. Catalyzes the condensation of (S)-aspartate-beta-semialdehyde [(S)-ASA] and pyruvate to 4-hydroxy-tetrahydrodipicolinate (HTPA). The sequence is that of 4-hydroxy-tetrahydrodipicolinate synthase from Oceanobacillus iheyensis (strain DSM 14371 / CIP 107618 / JCM 11309 / KCTC 3954 / HTE831).